Here is a 324-residue protein sequence, read N- to C-terminus: Appendage-associated protein (324 aa).

Residues 1 to 32 (MGCPVSRGGSPGCGRRIAEELRLAEDARLRLA) form the signal peptide. Residues 195-255 (IAQAKEIAQA…AADKLQALGK (61 aa)) adopt a coiled-coil conformation.

The protein resides in the secreted. Functionally, associates with actin filament appendages that are formed in the inclusion appendages of the parasitophorous vacuole during infection of the host erythrocyte. The sequence is that of Appendage-associated protein (aaaP1) from Anaplasma marginale (strain Florida).